We begin with the raw amino-acid sequence, 35 residues long: Thionin NsW2 (35 aa).

3 cysteine pairs are disulfide-bonded: cysteine 4/cysteine 32, cysteine 12/cysteine 30, and cysteine 16/cysteine 26.

In terms of processing, contains 4 disulfide bonds.

Its subcellular location is the secreted. In terms of biological role, antimicrobial peptide disrupting membranes. Has antibacterial against Gram-positive bacteria S.aureus (MIC=6.5 uM) and B.subtilis (MIC=3.25 uM) but not against Gram-negative bacterium E.coli. Has antifungal activity against C.albicans (MIC=3.25 uM). This chain is Thionin NsW2, found in Nigella sativa (Black cumin).